Consider the following 612-residue polypeptide: RNA-binding protein MRN1 (612 aa).

Residues 1 to 28 show a composition bias toward low complexity; sequence MVVSYNNNNNNNNNNNNNNISNNNNNNN. Disordered stretches follow at residues 1 to 57 and 105 to 125; these read MVVS…TYAS and PTQF…SQEQ. Polar residues-rich tracts occupy residues 42–57 and 115–125; these read YQQS…TYAS and DSQQQRFSQEQ. 4 RRM domains span residues 201 to 274, 292 to 379, 431 to 504, and 522 to 602; these read RTVY…WGKP, RNVY…KTQQ, RTVY…WGKH, and RNVY…FGKD.

It is found in the cytoplasm. In terms of biological role, RNA-binding protein that binds specific categories of mRNAs, including those that contain upstream open reading frames (uORFs) and internal ribosome entry sites (IRES). Probably involved in translational regulation. This chain is RNA-binding protein MRN1 (MRN1), found in Saccharomyces cerevisiae (strain ATCC 204508 / S288c) (Baker's yeast).